The sequence spans 75 residues: Small ribosomal subunit protein bS18 (75 aa).

The protein belongs to the bacterial ribosomal protein bS18 family. In terms of assembly, part of the 30S ribosomal subunit. Forms a tight heterodimer with protein bS6.

In terms of biological role, binds as a heterodimer with protein bS6 to the central domain of the 16S rRNA, where it helps stabilize the platform of the 30S subunit. This is Small ribosomal subunit protein bS18 from Idiomarina loihiensis (strain ATCC BAA-735 / DSM 15497 / L2-TR).